Here is a 411-residue protein sequence, read N- to C-terminus: C6 finger domain transcription factor hasA (411 aa).

The span at 1–17 (MTSTLPYLTSPPATHPS) shows a compositional bias: polar residues. The interval 1–21 (MTSTLPYLTSPPATHPSNSDH) is disordered. The zn(2)-C6 fungal-type DNA-binding region spans 28–54 (CDSCHQCKVKCSGGSPCFRCTSKGLNC).

It localises to the nucleus. Its function is as follows. Transcription factor; part of the gene cluster that mediates the biosynthesis of hexadehydro-astechrome (HAS), a tryptophan-derived iron(III)-complex that acts as a virulence factor in infected mice. Positively regulates the expression of the HAS biosynthetic genes. The polypeptide is C6 finger domain transcription factor hasA (Aspergillus fumigatus (strain CBS 144.89 / FGSC A1163 / CEA10) (Neosartorya fumigata)).